Here is a 391-residue protein sequence, read N- to C-terminus: Metal tolerance protein 7 (391 aa).

The interval 1 to 21 (MGSRGRRGGGERETETEEDET) is disordered. Over 1-103 (MGSRGRRGGG…LRQMAKGERL (103 aa)) the chain is Cytoplasmic. The chain crosses the membrane as a helical span at residues 104–124 (AINLSNIINLILFIGKVLASV). Over 125–134 (ESLSMAVIAS) the chain is Vacuolar. The chain crosses the membrane as a helical span at residues 135 to 155 (TLDSLLDLLSGFILWFTAHAM). Residues 156-171 (KKPNKYSYPIGKRRMQ) lie on the Cytoplasmic side of the membrane. The chain crosses the membrane as a helical span at residues 172 to 192 (PVGIIVFASVMGTLGFQVLIE). Over 193–210 (SGRQLITNEHQVFDHRKE) the chain is Vacuolar. A helical transmembrane segment spans residues 211 to 231 (LWMIGSMSSVAVVKFFLMLYC). The Cytoplasmic segment spans residues 232–246 (RSFKNEIVRAYAQDH). The helical transmembrane segment at 247–264 (FFDVITNSVGLVSALLAV) threads the bilayer. Residues 265–266 (RY) lie on the Vacuolar side of the membrane. The helical transmembrane segment at 267–287 (KWWMDPVGAILIAVYTITTWA) threads the bilayer. Topologically, residues 288–391 (RTVVENVGTL…THRPEHKAEV (104 aa)) are cytoplasmic.

This sequence belongs to the cation diffusion facilitator (CDF) transporter (TC 2.A.4) family. SLC30A subfamily.

The protein localises to the vacuole membrane. Its function is as follows. Involved in sequestration of excess metal in the cytoplasm into vacuoles to maintain metal homeostasis. This is Metal tolerance protein 7 (MTP7) from Oryza sativa subsp. japonica (Rice).